A 708-amino-acid polypeptide reads, in one-letter code: DNA ligase (708 aa).

NAD(+) is bound by residues 35–39 (DADYD), 84–85 (SL), and E118. The active-site N6-AMP-lysine intermediate is the K120. R141, E182, K303, and K327 together coordinate NAD(+). C419, C422, C437, and C443 together coordinate Zn(2+). The BRCT domain occupies 628 to 708 (TRASEVSGKT…GWAKIVADAQ (81 aa)).

Belongs to the NAD-dependent DNA ligase family. LigA subfamily. Mg(2+) is required as a cofactor. Requires Mn(2+) as cofactor.

The enzyme catalyses NAD(+) + (deoxyribonucleotide)n-3'-hydroxyl + 5'-phospho-(deoxyribonucleotide)m = (deoxyribonucleotide)n+m + AMP + beta-nicotinamide D-nucleotide.. Functionally, DNA ligase that catalyzes the formation of phosphodiester linkages between 5'-phosphoryl and 3'-hydroxyl groups in double-stranded DNA using NAD as a coenzyme and as the energy source for the reaction. It is essential for DNA replication and repair of damaged DNA. The chain is DNA ligase from Rhizorhabdus wittichii (strain DSM 6014 / CCUG 31198 / JCM 15750 / NBRC 105917 / EY 4224 / RW1) (Sphingomonas wittichii).